Here is a 356-residue protein sequence, read N- to C-terminus: Protein trichome birefringence-like 41 (356 aa).

A helical; Signal-anchor for type II membrane protein transmembrane segment spans residues 12–31; sequence SALVLSLLLLLLLPLLHEAA. A GDS motif motif is present at residues 107–109; sequence GDS. Residues 333–347 carry the DCXHWCLPGXXDXWN motif motif; sequence DCSHWCLSGVPDTWN.

This sequence belongs to the PC-esterase family. TBL subfamily.

Its subcellular location is the membrane. In terms of biological role, may act as a bridging protein that binds pectin and other cell wall polysaccharides. Probably involved in maintaining esterification of pectins. May be involved in the specific O-acetylation of cell wall polymers. The chain is Protein trichome birefringence-like 41 (TBL41) from Arabidopsis thaliana (Mouse-ear cress).